The primary structure comprises 105 residues: Large ribosomal subunit protein bL21 (105 aa).

The protein belongs to the bacterial ribosomal protein bL21 family. In terms of assembly, part of the 50S ribosomal subunit. Contacts protein L20.

In terms of biological role, this protein binds to 23S rRNA in the presence of protein L20. The polypeptide is Large ribosomal subunit protein bL21 (Rickettsia bellii (strain OSU 85-389)).